We begin with the raw amino-acid sequence, 353 residues long: Photosystem II protein D1 (353 aa).

Position 2 is an N-acetylthreonine (threonine 2). Threonine 2 is modified (phosphothreonine). The next 3 helical transmembrane spans lie at 29 to 46 (YIGWFGVLMIPTLLTATS), 118 to 133 (HFLLGVACYMGREWEL), and 142 to 156 (WIAVAYSAPVAAATA). Histidine 118 contributes to the chlorophyll a binding site. Residue tyrosine 126 coordinates pheophytin a. 2 residues coordinate [CaMn4O5] cluster: aspartate 170 and glutamate 189. The chain crosses the membrane as a helical span at residues 197–218 (FHMLGVAGVFGGSLFSAMHGSL). Histidine 198 is a chlorophyll a binding site. A quinone contacts are provided by residues histidine 215 and 264–265 (SF). Histidine 215 is a Fe cation binding site. Position 272 (histidine 272) interacts with Fe cation. The helical transmembrane segment at 274 to 288 (FLAAWPVVGIWFTAL) threads the bilayer. [CaMn4O5] cluster contacts are provided by histidine 332, glutamate 333, and alanine 344. Residues 345 to 353 (AIEAPAVNG) constitute a propeptide that is removed on maturation.

Belongs to the reaction center PufL/M/PsbA/D family. As to quaternary structure, PSII is composed of 1 copy each of membrane proteins PsbA, PsbB, PsbC, PsbD, PsbE, PsbF, PsbH, PsbI, PsbJ, PsbK, PsbL, PsbM, PsbT, PsbX, PsbY, PsbZ, Psb30/Ycf12, at least 3 peripheral proteins of the oxygen-evolving complex and a large number of cofactors. It forms dimeric complexes. The D1/D2 heterodimer binds P680, chlorophylls that are the primary electron donor of PSII, and subsequent electron acceptors. It shares a non-heme iron and each subunit binds pheophytin, quinone, additional chlorophylls, carotenoids and lipids. D1 provides most of the ligands for the Mn4-Ca-O5 cluster of the oxygen-evolving complex (OEC). There is also a Cl(-1) ion associated with D1 and D2, which is required for oxygen evolution. The PSII complex binds additional chlorophylls, carotenoids and specific lipids. is required as a cofactor. In terms of processing, tyr-161 forms a radical intermediate that is referred to as redox-active TyrZ, YZ or Y-Z. Post-translationally, C-terminally processed by CTPA; processing is essential to allow assembly of the oxygen-evolving complex and thus photosynthetic growth.

It is found in the plastid. Its subcellular location is the chloroplast thylakoid membrane. It catalyses the reaction 2 a plastoquinone + 4 hnu + 2 H2O = 2 a plastoquinol + O2. In terms of biological role, photosystem II (PSII) is a light-driven water:plastoquinone oxidoreductase that uses light energy to abstract electrons from H(2)O, generating O(2) and a proton gradient subsequently used for ATP formation. It consists of a core antenna complex that captures photons, and an electron transfer chain that converts photonic excitation into a charge separation. The D1/D2 (PsbA/PsbD) reaction center heterodimer binds P680, the primary electron donor of PSII as well as several subsequent electron acceptors. This is Photosystem II protein D1 from Conocephalum japonicum (Liverwort).